The sequence spans 219 residues: Agamous-like MADS-box protein AGL19 (219 aa).

One can recognise an MADS-box domain in the interval 1–61; the sequence is MVRGKTEMKR…SKLYEFSSSS (61 aa). The interval 77–96 is disordered; the sequence is GNNHKRNDNSQQARDETSGL. The 91-residue stretch at 86-176 folds into the K-box domain; sequence SQQARDETSG…KEKWLGMGTA (91 aa).

As to quaternary structure, interacts with SOC1 and AGL21. In terms of tissue distribution, mostly expressed in the outer layers of the root meristem (lateral root cap and epidermis) and in the central cylinder cells of mature roots. Also present in rosette leaves and seedlings and, to a lesser extent, in cauline leaves and flowers. Enriched in apices including the shoot apical meristem and developing leaf primordia.

The protein resides in the nucleus. In terms of biological role, probable transcription factor that promotes flowering, especially in response to vernalization by short periods of cold, in an FLC-inpedendent manner. The protein is Agamous-like MADS-box protein AGL19 (AGL19) of Arabidopsis thaliana (Mouse-ear cress).